A 142-amino-acid polypeptide reads, in one-letter code: Prefoldin subunit alpha 1 (142 aa).

This sequence belongs to the prefoldin subunit alpha family. Heterohexamer of two alpha and four beta subunits.

The protein resides in the cytoplasm. Molecular chaperone capable of stabilizing a range of proteins. Seems to fulfill an ATP-independent, HSP70-like function in archaeal de novo protein folding. This chain is Prefoldin subunit alpha 1 (pfdA1), found in Methanocaldococcus jannaschii (strain ATCC 43067 / DSM 2661 / JAL-1 / JCM 10045 / NBRC 100440) (Methanococcus jannaschii).